A 301-amino-acid polypeptide reads, in one-letter code: Probable aspartoacylase (301 aa).

The Zn(2+) site is built by His-13 and Glu-16. Substrate contacts are provided by residues Arg-54 and 61–62; that span reads NR. Position 105 (His-105) interacts with Zn(2+). Substrate is bound by residues Glu-163 and Tyr-273.

The protein belongs to the AspA/AstE family. Aspartoacylase subfamily. Zn(2+) serves as cofactor.

It carries out the reaction an N-acyl-L-aspartate + H2O = a carboxylate + L-aspartate. In Prochlorococcus marinus (strain MIT 9301), this protein is Probable aspartoacylase.